Here is a 499-residue protein sequence, read N- to C-terminus: UDP-N-acetylmuramoyl-L-alanyl-D-glutamate--2,6-diaminopimelate ligase (499 aa).

Ser-32 is a UDP-N-acetyl-alpha-D-muramoyl-L-alanyl-D-glutamate binding site. Residue 117-123 coordinates ATP; the sequence is GTNGKTT. UDP-N-acetyl-alpha-D-muramoyl-L-alanyl-D-glutamate is bound by residues 159–160, Ser-186, Gln-192, and Arg-194; that span reads TT. Lys-226 bears the N6-carboxylysine mark. Residues Arg-394, 418-421, Gly-469, and Glu-473 each bind meso-2,6-diaminopimelate; that span reads DNPR. A Meso-diaminopimelate recognition motif motif is present at residues 418–421; the sequence is DNPR.

Belongs to the MurCDEF family. MurE subfamily. Mg(2+) serves as cofactor. In terms of processing, carboxylation is probably crucial for Mg(2+) binding and, consequently, for the gamma-phosphate positioning of ATP.

It localises to the cytoplasm. The enzyme catalyses UDP-N-acetyl-alpha-D-muramoyl-L-alanyl-D-glutamate + meso-2,6-diaminopimelate + ATP = UDP-N-acetyl-alpha-D-muramoyl-L-alanyl-gamma-D-glutamyl-meso-2,6-diaminopimelate + ADP + phosphate + H(+). The protein operates within cell wall biogenesis; peptidoglycan biosynthesis. Its function is as follows. Catalyzes the addition of meso-diaminopimelic acid to the nucleotide precursor UDP-N-acetylmuramoyl-L-alanyl-D-glutamate (UMAG) in the biosynthesis of bacterial cell-wall peptidoglycan. This is UDP-N-acetylmuramoyl-L-alanyl-D-glutamate--2,6-diaminopimelate ligase from Synechococcus sp. (strain WH7803).